Consider the following 241-residue polypeptide: Pyrroloquinoline-quinone synthase (241 aa).

This sequence belongs to the PqqC family.

It catalyses the reaction 6-(2-amino-2-carboxyethyl)-7,8-dioxo-1,2,3,4,7,8-hexahydroquinoline-2,4-dicarboxylate + 3 O2 = pyrroloquinoline quinone + 2 H2O2 + 2 H2O + H(+). The protein operates within cofactor biosynthesis; pyrroloquinoline quinone biosynthesis. Its function is as follows. Ring cyclization and eight-electron oxidation of 3a-(2-amino-2-carboxyethyl)-4,5-dioxo-4,5,6,7,8,9-hexahydroquinoline-7,9-dicarboxylic-acid to PQQ. This is Pyrroloquinoline-quinone synthase from Ruegeria pomeroyi (strain ATCC 700808 / DSM 15171 / DSS-3) (Silicibacter pomeroyi).